An 88-amino-acid chain; its full sequence is UPF0223 protein BH2638 (88 aa).

It belongs to the UPF0223 family.

This chain is UPF0223 protein BH2638, found in Halalkalibacterium halodurans (strain ATCC BAA-125 / DSM 18197 / FERM 7344 / JCM 9153 / C-125) (Bacillus halodurans).